The sequence spans 189 residues: UPF0398 protein lhv_1265 (189 aa).

The protein belongs to the UPF0398 family.

In Lactobacillus helveticus (strain DPC 4571), this protein is UPF0398 protein lhv_1265.